Here is a 350-residue protein sequence, read N- to C-terminus: Phosphate acyltransferase (350 aa).

This sequence belongs to the PlsX family. As to quaternary structure, homodimer. Probably interacts with PlsY.

It is found in the cytoplasm. It carries out the reaction a fatty acyl-[ACP] + phosphate = an acyl phosphate + holo-[ACP]. Its pathway is lipid metabolism; phospholipid metabolism. Catalyzes the reversible formation of acyl-phosphate (acyl-PO(4)) from acyl-[acyl-carrier-protein] (acyl-ACP). This enzyme utilizes acyl-ACP as fatty acyl donor, but not acyl-CoA. The polypeptide is Phosphate acyltransferase (Magnetococcus marinus (strain ATCC BAA-1437 / JCM 17883 / MC-1)).